The primary structure comprises 1207 residues: Disease resistance protein RPP2B (1207 aa).

A TIR domain is found at 15–180 (CEFDVFVSFR…EIVKNTFRML (166 aa)). Residue Glu-89 is part of the active site. Residues 201–445 (ELEKLLMFDN…FLDIACFFRS (245 aa)) form the NB-ARC domain. 9 LRR repeats span residues 607–630 (PKEL…EKNT), 653–676 (AKNL…VKQM), 677–699 (NELI…GFKI), 720–743 (SESI…IESL), 744–767 (HSLI…LYKL), 769–791 (SLQE…KEKM), 792–815 (ECLE…CLSN), 840–862 (NSFL…KFSS), and 863–886 (LRSL…IEKL).

The protein belongs to the disease resistance TIR-NB-LRR family.

The enzyme catalyses NAD(+) + H2O = ADP-D-ribose + nicotinamide + H(+). Functionally, disease resistance protein that cooperates with RPP2A to confer resistance to Hyaloperonospora parasitica isolate Cala2. This Arabidopsis thaliana (Mouse-ear cress) protein is Disease resistance protein RPP2B.